Here is a 616-residue protein sequence, read N- to C-terminus: Chaperone protein HscA (616 aa).

It belongs to the heat shock protein 70 family.

Chaperone involved in the maturation of iron-sulfur cluster-containing proteins. Has a low intrinsic ATPase activity which is markedly stimulated by HscB. Involved in the maturation of IscU. The polypeptide is Chaperone protein HscA (Pectobacterium atrosepticum (strain SCRI 1043 / ATCC BAA-672) (Erwinia carotovora subsp. atroseptica)).